The following is a 207-amino-acid chain: Small ribosomal subunit protein uS4 (207 aa).

Residues 26–47 (AINNKNYKPGQQGNSSSISKPS) form a disordered region. Over residues 28–39 (NNKNYKPGQQGN) the composition is skewed to polar residues. The region spanning 95–158 (RRLDAVVYRL…KQIPIVIGAI (64 aa)) is the S4 RNA-binding domain.

The protein belongs to the universal ribosomal protein uS4 family. As to quaternary structure, part of the 30S ribosomal subunit. Contacts protein S5. The interaction surface between S4 and S5 is involved in control of translational fidelity.

Its function is as follows. One of the primary rRNA binding proteins, it binds directly to 16S rRNA where it nucleates assembly of the body of the 30S subunit. Functionally, with S5 and S12 plays an important role in translational accuracy. The chain is Small ribosomal subunit protein uS4 from Orientia tsutsugamushi (strain Boryong) (Rickettsia tsutsugamushi).